A 315-amino-acid polypeptide reads, in one-letter code: MDLRQFLMCLSLCTAFALSKPTEKKDRVHHEPQLSDKVHNDAQSFDYDHDAFLGAEEAKTFDQLTPEESKERLGMIVDKIDADKDGFVTEGELKSWIKHAQKKYIYDNVENQWQEFDLNQDGLISWDEYRNVTYGTYLDDPDPDDGFNYKQMMVRDERRFKMADKDGDLIATKEEFTAFLHPEEYDYMKDIVVQEPMEDIDKNADGFIDLEEYIGDMYSHDGNADEPEWVKTEREQFVEFRDKNRDGKMDKEETKDWILPSDYDHAEAEARHLVYESDQNKDGKLTKEEIVDKYDLFVGSQATDFGEALVRHDEF.

A signal peptide spans 1–19 (MDLRQFLMCLSLCTAFALS). Position 44 is a phosphoserine (Ser-44). Position 47 is a phosphotyrosine (Tyr-47). Thr-65 is modified (phosphothreonine). EF-hand domains are found at residues 68-103 (ESKE…AQKK), 104-139 (YIYD…TYLD), 151-186 (QMMV…EEYD), 188-223 (MKDI…HDGN), 229-264 (WVKT…SDYD), and 265-300 (HAEA…FVGS). Ser-69 is subject to Phosphoserine. 8 residues coordinate Ca(2+): Asp-81, Asp-83, Asp-85, Glu-92, Asp-117, Asn-119, Asp-121, and Glu-128. Residue Asn-131 is glycosylated (N-linked (GlcNAc...) asparagine). Asp-164 contributes to the Ca(2+) binding site. Lys-165 carries the N6-acetyllysine modification. The Ca(2+) site is built by Asp-166, Asp-168, Glu-175, Asp-201, Asn-203, Asp-205, Glu-212, Asp-242, Asn-244, Asp-246, Lys-248, and Glu-253. Position 254 is a phosphothreonine (Thr-254). Residues Ser-261 and Ser-277 each carry the phosphoserine modification. Residues Asp-278, Asn-280, Asp-282, Lys-284, and Glu-289 each contribute to the Ca(2+) site. A Prevents secretion from ER motif is present at residues 312–315 (HDEF).

Belongs to the CREC family. In terms of assembly, interacts with GGCX.

It is found in the endoplasmic reticulum membrane. The protein resides in the golgi apparatus. It localises to the secreted. The protein localises to the melanosome. Its subcellular location is the sarcoplasmic reticulum lumen. In terms of biological role, involved in regulation of vitamin K-dependent carboxylation of multiple N-terminal glutamate residues. Seems to inhibit gamma-carboxylase GGCX. Binds 7 calcium ions with a low affinity. The polypeptide is Calumenin (CALU) (Bos taurus (Bovine)).